Here is a 70-residue protein sequence, read N- to C-terminus: uncharacterized protein (70 aa).

Residues 15–37 (IFAFLLFRLCKFCCVFCCALCNV) form a helical membrane-spanning segment.

Its subcellular location is the membrane. This is an uncharacterized protein from Dictyostelium discoideum (Social amoeba).